Here is a 533-residue protein sequence, read N- to C-terminus: Adenine deaminase (533 aa).

The protein belongs to the metallo-dependent hydrolases superfamily. Adenine deaminase family. It depends on Mn(2+) as a cofactor.

It catalyses the reaction adenine + H2O + H(+) = hypoxanthine + NH4(+). This is Adenine deaminase from Sulfurovum sp. (strain NBC37-1).